Reading from the N-terminus, the 277-residue chain is Sarcosine/dimethylglycine N-methyltransferase (277 aa).

It belongs to the methyltransferase superfamily. As to quaternary structure, monomer.

The enzyme catalyses sarcosine + 2 S-adenosyl-L-methionine = glycine betaine + 2 S-adenosyl-L-homocysteine + 2 H(+). It catalyses the reaction sarcosine + S-adenosyl-L-methionine = N,N-dimethylglycine + S-adenosyl-L-homocysteine + H(+). It carries out the reaction N,N-dimethylglycine + S-adenosyl-L-methionine = glycine betaine + S-adenosyl-L-homocysteine + H(+). Its pathway is amine and polyamine biosynthesis; betaine biosynthesis via glycine pathway; betaine from glycine: step 2/3. The protein operates within amine and polyamine biosynthesis; betaine biosynthesis via glycine pathway; betaine from glycine: step 3/3. Inhibited by n-butylic acid and S-adenosyl-L-homocysteine. Its function is as follows. Catalyzes the methylation of sarcosine and dimethylglycine to dimethylglycine and betaine, respectively, with S-adenosylmethionine (AdoMet) acting as the methyl donor. Activity with sarcosine is much weaker than activity with dimethylglycine. The chain is Sarcosine/dimethylglycine N-methyltransferase from Aphanothece halophytica.